The sequence spans 239 residues: Caffeoyl-CoA O-methyltransferase 1 (239 aa).

Lysine 13 contributes to the substrate binding site. S-adenosyl-L-methionine-binding positions include threonine 55, glutamate 77, 79 to 80, serine 85, aspartate 103, and alanine 132; that span reads GV. Aspartate 155 is a binding site for substrate. Aspartate 155 serves as a coordination point for a divalent metal cation. Aspartate 157 contributes to the S-adenosyl-L-methionine binding site. The a divalent metal cation site is built by aspartate 181 and asparagine 182. Substrate is bound at residue asparagine 186.

Belongs to the class I-like SAM-binding methyltransferase superfamily. Cation-dependent O-methyltransferase family. CCoAMT subfamily. As to quaternary structure, monomer. The cofactor is Mg(2+). Mostly expressed in the bottom and middle parts of the stems.

It carries out the reaction (E)-caffeoyl-CoA + S-adenosyl-L-methionine = (E)-feruloyl-CoA + S-adenosyl-L-homocysteine + H(+). The protein operates within aromatic compound metabolism; phenylpropanoid biosynthesis. Its function is as follows. Methylates caffeoyl-CoA to feruloyl-CoA and 5-hydroxyferuloyl-CoA to sinapoyl-CoA. Plays a role in the synthesis of feruloylated polysaccharides. Involved in the reinforcement of the plant cell wall. Also involved in the responding to wounding or pathogen challenge by the increased formation of cell wall-bound ferulic acid polymers. This Nicotiana tabacum (Common tobacco) protein is Caffeoyl-CoA O-methyltransferase 1 (CCOAOMT1).